We begin with the raw amino-acid sequence, 644 residues long: Far upstream element-binding protein 1 (644 aa).

Disordered stretches follow at residues 1 to 31 and 44 to 94; these read MADY…NDAF and KIGG…PMHQ. Ala2 carries the post-translational modification N-acetylalanine. Residues 14 to 27 are compositionally biased toward gly residues; the sequence is SAGGGGGGGGGGGV. Phosphoserine occurs at positions 52 and 55. A compositionally biased stretch (basic and acidic residues) spans 65–77; sequence RPLEDGDQPDAKK. Residues 81 to 94 are compositionally biased toward polar residues; it reads QNDSFGTQLPPMHQ. KH domains follow at residues 100–164, 185–251, and 275–339; these read VMTE…KRLL, NAVQ…KEMV, and NEGI…AEII. The residue at position 140 (Ser140) is a Phosphoserine. At Thr153 the chain carries Phosphothreonine. Arg321, Arg359, Arg361, and Arg363 each carry omega-N-methylarginine. The interval 346–365 is disordered; it reads VQAGNPGGPGPGGRGRGRGQ. Over residues 350–365 the composition is skewed to gly residues; that stretch reads NPGGPGPGGRGRGRGQ. Residues 376–443 form the KH 4 domain; it reads LQEFNFIVPT…QQIDYARQLI (68 aa). Phosphothreonine is present on Thr432. 2 disordered regions span residues 447-532 and 548-580; these read IGGP…GTDP and QAQP…AGQV. A compositionally biased stretch (pro residues) spans 468-505; that stretch reads PHGPPGPPGPGTPMGPYNPAPYNPGPPGPAPHGPPAPY. Residues 556-573 show a composition bias toward low complexity; it reads PAGAPTTTQTNGQGDQQN. Ser630 is subject to Phosphoserine.

Found in a complex with PUF60 and far upstream element (FUSE) DNA segment. Interacts with PUF60 and JTV1. In terms of processing, ubiquitinated. This targets the protein for proteasome-mediated degradation.

The protein localises to the nucleus. Regulates MYC expression by binding to a single-stranded far-upstream element (FUSE) upstream of the MYC promoter. May act both as activator and repressor of transcription. The chain is Far upstream element-binding protein 1 (FUBP1) from Homo sapiens (Human).